We begin with the raw amino-acid sequence, 538 residues long: Serine/threonine-protein phosphatase 5 (538 aa).

3 TPR repeats span residues 13-46 (AEEF…NSNN), 48-80 (VYWA…DSRY), and 81-114 (SKGY…SPND). Helical transmembrane passes span 163 to 183 (SSMP…VVAV) and 185 to 205 (GFAT…TFWW). 4 residues coordinate Mn(2+): Asp282, His284, Asp311, and Asn343. Residue His344 is the Proton donor of the active site. Residues His392 and His467 each contribute to the Mn(2+) site.

It belongs to the PPP phosphatase family. PP-5 (PP-T) subfamily. As to quaternary structure, interacts with PHYA and PHYB, mostly when they are phosphorylated and in Pfr forms. It depends on Mn(2+) as a cofactor.

It is found in the endoplasmic reticulum membrane. The protein resides in the nucleus membrane. Its subcellular location is the cytoplasm. The protein localises to the nucleus. It localises to the nucleoplasm. It is found in the nucleus speckle. The enzyme catalyses O-phospho-L-seryl-[protein] + H2O = L-seryl-[protein] + phosphate. It catalyses the reaction O-phospho-L-threonyl-[protein] + H2O = L-threonyl-[protein] + phosphate. With respect to regulation, activated by arachidonic acid (AA). In terms of biological role, isoform 2 dephosphorylates phosphorylated phytochromes, with a preference toward Pfr forms, and enhances phytochrome-mediated photoresponses, probably by enhancing their stability and their binding affinity for light signal transducers such as NDPK2. Can use para-nitrophenylphosphate (pNPP) as substrate. The sequence is that of Serine/threonine-protein phosphatase 5 (PAPP5) from Arabidopsis thaliana (Mouse-ear cress).